The chain runs to 229 residues: Nisin biosynthesis regulatory protein NisR (229 aa).

Residues 4–117 (KILIVDDDQE…QLVAKVEANI (114 aa)) enclose the Response regulatory domain. A 4-aspartylphosphate modification is found at aspartate 53. The segment at residues 132–229 (EIRRDLGPIT…VRGLGYQWHG (98 aa)) is a DNA-binding region (ompR/PhoB-type).

Phosphorylated by NisK.

In terms of biological role, member of the two-component regulatory system NisK/NisR involved in the regulation of the biosynthesis of lantibiotic nisin. NisR may function as a regulatory protein. The sequence is that of Nisin biosynthesis regulatory protein NisR (nisR) from Lactococcus lactis subsp. lactis (Streptococcus lactis).